Reading from the N-terminus, the 1104-residue chain is Transient receptor potential cation channel subfamily M member 8 (1104 aa).

At 1-733 the chain is on the cytoplasmic side; it reads MSFEGARLSM…LWYYVAFFTS (733 aa). The chain crosses the membrane as a helical span at residues 734 to 758; that stretch reads PFVVFSWNVVFYIAFLLLFAYVLLM. Over 759-765 the chain is Extracellular; that stretch reads DFHSVPH. A helical transmembrane segment spans residues 766–789; that stretch reads TPELILYALVFVLFCDEVRQWYMN. Ca(2+) contacts are provided by Glu-782 and Gln-785. Topologically, residues 790–796 are cytoplasmic; it reads GVNYFTD. The chain crosses the membrane as a helical span at residues 797 to 817; it reads LWNVMDTLGLFYFIAGIVFRL. Positions 799 and 802 each coordinate Ca(2+). Topologically, residues 818–822 are extracellular; the sequence is HSSNK. A helical membrane pass occupies residues 823-848; it reads SSLYSGRVIFCLDYIIFTLRLIHIFT. The Cytoplasmic portion of the chain corresponds to 849 to 853; the sequence is VSRNL. The helical transmembrane segment at 854 to 890 threads the bilayer; that stretch reads GPKIIMLQRMLIDVFFFLFLFAVWMVAFGVARQGILR. The Extracellular portion of the chain corresponds to 891–895; it reads QNEQR. The pore-forming intramembrane region spans 896–912; the sequence is WRWIFRSVIYEPYLAMF. The Extracellular segment spans residues 913-953; sequence GQVPSDVDSTTYDFSHCTFSGNESKPLCVELDEYNLPRFPE. Residues 954 to 984 form a helical membrane-spanning segment; sequence WITIPLVCIYMLSTNILLVNLLVAMFGYTVG. Residues 985–1104 are Cytoplasmic-facing; that stretch reads IVQENNDQVW…LLKEIANKIK (120 aa). Positions 1067–1104 form a coiled coil; sequence INTKANDNAEEMRHRFRQLDTKLNDLKGLLKEIANKIK.

This sequence belongs to the transient receptor (TC 1.A.4) family. LTrpC subfamily. TRPM8 sub-subfamily. Homotetramer. Interacts (via N-terminus and C-terminus domains) with TCAF1; the interaction stimulates TRPM8 channel activity. Interacts (via N-terminus and C-terminus domains) with TCAF2; the interaction inhibits TRPM8 channel activity. Expressed in dorsal root and trigeminal ganglia. Specifically expressed in a subset of sensory neurons, including cold-sensitive neurons in trigeminal neurons.

The protein resides in the cell membrane. It localises to the membrane raft. It catalyses the reaction Ca(2+)(in) = Ca(2+)(out). The enzyme catalyses Na(+)(in) = Na(+)(out). It carries out the reaction K(+)(in) = K(+)(out). Its activity is regulated as follows. Activated by cold temperatures and by both natural and synthetic cooling compounds such as menthol and icilin. Activation of the channel requires the presence of PI(4,5)P2; PI(4,5)P2 is necessary to gate the channel. Activated by intracellular Ca(2+). In terms of biological role, non-selective ion channel permeable to monovalent and divalent cations, including Na(+), K(+), and Ca(2+), with higher permeability for Ca(2+). Activated by multiple factors, such as temperature, voltage, pressure, and changes in osmolality. Activated by cool temperatures (&lt;23-28 degrees Celsius) and by chemical ligands evoking a sensation of coolness, such as menthol and icilin, therefore plays a central role in the detection of environmental cold temperatures. TRPM8 is a voltage-dependent channel; its activation by cold or chemical ligands shifts its voltage thresholds towards physiological membrane potentials, leading to the opening of the channel. In addition to its critical role in temperature sensing, regulates basal tear secretion by sensing evaporation-induced cooling and changes in osmolality. The polypeptide is Transient receptor potential cation channel subfamily M member 8 (Trpm8) (Rattus norvegicus (Rat)).